The following is a 113-amino-acid chain: U11-theraphotoxin-Hhn1k (113 aa).

The N-terminal stretch at 1 to 21 (MNTVRVTFLLVFVLAVSLGQA) is a signal peptide. Positions 22–74 (DKDENRMEMQEKTEQGKSYLDFAENLLLQKLEELEAKLLEEDSEESRNSRQKR) are excised as a propeptide. Residues 61 to 83 (EEDSEESRNSRQKRCIGEGVPCD) are disordered. 3 disulfides stabilise this stretch: Cys75/Cys90, Cys82/Cys95, and Cys89/Cys110.

This sequence belongs to the neurotoxin 14 (magi-1) family. 01 (HNTX-16) subfamily. Expressed by the venom gland.

It localises to the secreted. Its function is as follows. Probable ion channel inhibitor. This chain is U11-theraphotoxin-Hhn1k, found in Cyriopagopus hainanus (Chinese bird spider).